Consider the following 361-residue polypeptide: AP2/ERF and B3 domain-containing transcription repressor TEM1 (361 aa).

A disordered region spans residues M1–K73. The span at S9 to T27 shows a compositional bias: low complexity. The AP2/ERF DNA-binding region spans K71–K126. Residues F195–S306 constitute a DNA-binding region (TF-B3).

This sequence belongs to the AP2/ERF transcription factor family. RAV subfamily. Interacts with FT. As to expression, expressed in leaves.

The protein localises to the nucleus. Transcriptional repressor of flowering time on long day plants. Acts directly on FT expression by binding 5'-CAACA-3' and 5'-CACCTG-3 sequences. Functionally redundant with TEM2. This Arabidopsis thaliana (Mouse-ear cress) protein is AP2/ERF and B3 domain-containing transcription repressor TEM1 (TEM1).